The primary structure comprises 509 residues: Cytochrome P450 monooxygenase ARMGADRAFT_974139 (509 aa).

Residues 4-24 form a helical membrane-spanning segment; that stretch reads ASLAVVVWAILLVLWLRRIFG. 2 N-linked (GlcNAc...) asparagine glycosylation sites follow: Asn-96 and Asn-279. Cys-439 provides a ligand contact to heme.

It belongs to the cytochrome P450 family. It depends on heme as a cofactor.

It localises to the membrane. It functions in the pathway secondary metabolite biosynthesis. Functionally, cytochrome P450 monooxygenase, part of the gene cluster that mediates the biosynthesis of melleolides, a range of antifungal and phytotoxic polyketide derivatives composed of an orsellinic acid (OA) moiety esterified to various sesquiterpene alcohols. The first step in melleolides biosynthesis is performed by the delta(6)-protoilludene synthase PRO1 which catalyzes the cyclization of farnesyl diphosphate to protoilludene. The orsellinic acid synthase armB produces OA by condensing acetyl-CoA with 3 malonyl-CoA units in a three-round chain elongation reaction folowed by a C2-C7 ring closure. ArmB further catalyzes the trans-esterification of OA to the various sesquiterpene alcohols resulting from the hydroxylation of protoilludene. The melleolides cluster also includes 5 cytochrome P450 monooxygenases, 4 NAD(+)-dependent oxidoreductases, one flavin-dependent oxidoreductase, and one O-methyltransferase. The cytochrome P450 monooxygenases may be involved in protoilludene hydroxylation to elaborate melleolides with multiple alcohol groups, such as melleolide D, which carries alcohol functionalities at C-4, C-5, C-10, and C-13. The role of the NAD(+)-dependent enzymes remains unknown. Numerous melleolides, including arnamial, show 5'-O-methylation of the aromatic moiety which may be catalyzed by the methyltransferase encoded in the cluster. The flavin-dependent oxidoreductase might represent the dehydrogenase yielding the aldehyde in position 1 of arnamial and other melleolides. Finally, several halogenase localized outside of the cluster, are able to catalyze the transfer of a single chlorine atom to the melleolide backbone, resulting in a 6'-chloromelleolide product. The protein is Cytochrome P450 monooxygenase ARMGADRAFT_974139 of Armillaria gallica (Bulbous honey fungus).